A 115-amino-acid chain; its full sequence is Large ribosomal subunit protein uL18 (115 aa).

This sequence belongs to the universal ribosomal protein uL18 family. As to quaternary structure, part of the 50S ribosomal subunit; part of the 5S rRNA/L5/L18/L25 subcomplex. Contacts the 5S and 23S rRNAs.

In terms of biological role, this is one of the proteins that bind and probably mediate the attachment of the 5S RNA into the large ribosomal subunit, where it forms part of the central protuberance. This Marinobacter nauticus (strain ATCC 700491 / DSM 11845 / VT8) (Marinobacter aquaeolei) protein is Large ribosomal subunit protein uL18.